The chain runs to 551 residues: Dihydroxy-acid dehydratase (551 aa).

Position 52 (Cys-52) interacts with [2Fe-2S] cluster. Position 84 (Asp-84) interacts with Mg(2+). Cys-125 provides a ligand contact to [2Fe-2S] cluster. Residues Asp-126 and Lys-127 each contribute to the Mg(2+) site. An N6-carboxylysine modification is found at Lys-127. Position 197 (Cys-197) interacts with [2Fe-2S] cluster. Glu-448 contributes to the Mg(2+) binding site. Ser-474 functions as the Proton acceptor in the catalytic mechanism.

It belongs to the IlvD/Edd family. As to quaternary structure, homodimer. [2Fe-2S] cluster serves as cofactor. Requires Mg(2+) as cofactor.

The catalysed reaction is (2R)-2,3-dihydroxy-3-methylbutanoate = 3-methyl-2-oxobutanoate + H2O. It carries out the reaction (2R,3R)-2,3-dihydroxy-3-methylpentanoate = (S)-3-methyl-2-oxopentanoate + H2O. Its pathway is amino-acid biosynthesis; L-isoleucine biosynthesis; L-isoleucine from 2-oxobutanoate: step 3/4. It participates in amino-acid biosynthesis; L-valine biosynthesis; L-valine from pyruvate: step 3/4. Functions in the biosynthesis of branched-chain amino acids. Catalyzes the dehydration of (2R,3R)-2,3-dihydroxy-3-methylpentanoate (2,3-dihydroxy-3-methylvalerate) into 2-oxo-3-methylpentanoate (2-oxo-3-methylvalerate) and of (2R)-2,3-dihydroxy-3-methylbutanoate (2,3-dihydroxyisovalerate) into 2-oxo-3-methylbutanoate (2-oxoisovalerate), the penultimate precursor to L-isoleucine and L-valine, respectively. In Francisella tularensis subsp. tularensis (strain FSC 198), this protein is Dihydroxy-acid dehydratase.